We begin with the raw amino-acid sequence, 515 residues long: MTKRVLISVSDKAGIVEFAQELKKLGWEIISTGGTKVALDNAGVDTIAIDDVTGFPEMMDGRVKTLHPNIHGGLLARRDLDSHLEAAKDNKIELIDLVVVNLYPFKETILKPDVTYADAVENIDIGGPSMLRSAAKNHASVTVVVDPADYAVVLDELAANGETSYETRQRLAAKVFRHTAAYDALIAEYFTAQVGESKPEKLTLTYDLKQPMRYGENPQQDADFYQKALPTDYSIASAKQLNGKELSFNNIRDADAAIRIIRDFKDSPTVVALKHMNPCGIGQADDIETAWDYAYESDPVSIFGGIVVLNREVDAATAEKMHGVFLEIIIAPSYTDEALAILINKKKNLRILALPFNAQEASEVEAEYTGVVGGLLVQNQDVVKESPADWQVVTKRQPTETEATALEFAWKAIKYVKSNGIIVTNDHMTLGVGPGQTNRVASVRLAIDQAKDRLNGAVLASDAFFPFADNVEEIAKAGIKAIIQPGGSVRDQEFIEAADKYGLTMVFTGVRHFRH.

Residues 1-145 enclose the MGS-like domain; that stretch reads MTKRVLISVS…KNHASVTVVV (145 aa).

It belongs to the PurH family.

The enzyme catalyses (6R)-10-formyltetrahydrofolate + 5-amino-1-(5-phospho-beta-D-ribosyl)imidazole-4-carboxamide = 5-formamido-1-(5-phospho-D-ribosyl)imidazole-4-carboxamide + (6S)-5,6,7,8-tetrahydrofolate. It catalyses the reaction IMP + H2O = 5-formamido-1-(5-phospho-D-ribosyl)imidazole-4-carboxamide. It functions in the pathway purine metabolism; IMP biosynthesis via de novo pathway; 5-formamido-1-(5-phospho-D-ribosyl)imidazole-4-carboxamide from 5-amino-1-(5-phospho-D-ribosyl)imidazole-4-carboxamide (10-formyl THF route): step 1/1. The protein operates within purine metabolism; IMP biosynthesis via de novo pathway; IMP from 5-formamido-1-(5-phospho-D-ribosyl)imidazole-4-carboxamide: step 1/1. This chain is Bifunctional purine biosynthesis protein PurH, found in Streptococcus pneumoniae (strain JJA).